The primary structure comprises 343 residues: Heat-inducible transcription repressor HrcA (343 aa).

It belongs to the HrcA family.

Negative regulator of class I heat shock genes (grpE-dnaK-dnaJ and groELS operons). Prevents heat-shock induction of these operons. In Mycobacterium ulcerans (strain Agy99), this protein is Heat-inducible transcription repressor HrcA.